A 366-amino-acid polypeptide reads, in one-letter code: Bacteriochlorophyll a protein (366 aa).

5 residues coordinate bacteriochlorophyll a: His-110, His-145, His-290, His-297, and His-298.

In terms of assembly, homotrimer. Each subunit contains 7 molecules of bacteriochlorophyll a.

Its function is as follows. Intermediary in the transfer of excitation energy from the chlorophyll to the reaction centers. The sequence is that of Bacteriochlorophyll a protein from Prosthecochloris aestuarii.